We begin with the raw amino-acid sequence, 986 residues long: Translation initiation factor IF-2 (986 aa).

Residues 49–59 (EFAKDNAKGDS) are compositionally biased toward basic and acidic residues. The segment at 49–370 (EFAKDNAKGD…KNRLAKRHEY (322 aa)) is disordered. Residues 60 to 112 (KPASSAQKPAAKPVQQRRPAAPSAPASTSSSAPTPAAPARQASPASAHQQAPT) show a composition bias toward low complexity. Basic and acidic residues predominate over residues 135-168 (GQHDNRENGRDNREGRENGRQSRPNDRRNNDRRN). Over residues 170-182 (QGRPNNGQPGQHQ) the composition is skewed to low complexity. 2 stretches are compositionally biased toward gly residues: residues 254-286 (GRGGRPGRPGQGQGQGRGFRGGRPGQGGQGGPR) and 296-353 (GQGG…GRQG). Residues 357–366 (SKARKNRLAK) show a composition bias toward basic residues. Positions 479–651 (PRPPVVTVMG…VLLTADAELD (173 aa)) constitute a tr-type G domain. The interval 488–495 (GHVDHGKT) is G1. 488–495 (GHVDHGKT) lines the GTP pocket. The segment at 513-517 (GITQR) is G2. Residues 538 to 541 (DTPG) form a G3 region. GTP contacts are provided by residues 538–542 (DTPGH) and 592–595 (NKID). Positions 592 to 595 (NKID) are G4. The G5 stretch occupies residues 628–630 (SAK).

Belongs to the TRAFAC class translation factor GTPase superfamily. Classic translation factor GTPase family. IF-2 subfamily.

It localises to the cytoplasm. In terms of biological role, one of the essential components for the initiation of protein synthesis. Protects formylmethionyl-tRNA from spontaneous hydrolysis and promotes its binding to the 30S ribosomal subunits. Also involved in the hydrolysis of GTP during the formation of the 70S ribosomal complex. The protein is Translation initiation factor IF-2 of Bifidobacterium longum subsp. infantis (strain ATCC 15697 / DSM 20088 / JCM 1222 / NCTC 11817 / S12).